A 225-amino-acid chain; its full sequence is Glycerol-3-phosphate acyltransferase (225 aa).

The next 6 helical transmembrane spans lie at 1–21, 56–76, 95–115, 134–154, 159–178, and 182–201; these read MAIWLLCNGVLLIVAYFLGSF, GPGLATLGVDICKGAGAVALV, IGLWLSLVVIMAGLMAILGHS, VLLVMSWTVGLAALGIFALVV, IVSLSSISAAISLPVLMFVA, and LAYVLFSITAGVYVVWRHWA.

It belongs to the PlsY family. As to quaternary structure, probably interacts with PlsX.

It localises to the cell inner membrane. It carries out the reaction an acyl phosphate + sn-glycerol 3-phosphate = a 1-acyl-sn-glycero-3-phosphate + phosphate. It functions in the pathway lipid metabolism; phospholipid metabolism. Catalyzes the transfer of an acyl group from acyl-phosphate (acyl-PO(4)) to glycerol-3-phosphate (G3P) to form lysophosphatidic acid (LPA). This enzyme utilizes acyl-phosphate as fatty acyl donor, but not acyl-CoA or acyl-ACP. In Acaryochloris marina (strain MBIC 11017), this protein is Glycerol-3-phosphate acyltransferase.